A 492-amino-acid polypeptide reads, in one-letter code: uncharacterized protein (492 aa).

Helical transmembrane passes span 13-33 (LGFI…WRFG), 42-62 (GAFL…LMIL), 97-117 (FIIT…LIIL), 150-170 (GILV…SAGI), 180-200 (IMIP…LTLP), 222-242 (VWLS…GILI), 258-278 (AVTV…AVFG), 320-340 (FGIV…VSIV), 359-379 (LLAV…GAGL), 391-411 (GYLL…LFGG), 428-448 (VWWK…VVFL), and 463-483 (TTYV…SVIL).

This sequence belongs to the sodium:neurotransmitter symporter (SNF) (TC 2.A.22) family.

The protein localises to the cell membrane. Putative sodium-dependent transporter. This is an uncharacterized protein from Methanocaldococcus jannaschii (strain ATCC 43067 / DSM 2661 / JAL-1 / JCM 10045 / NBRC 100440) (Methanococcus jannaschii).